A 4870-amino-acid polypeptide reads, in one-letter code: Malformin synthetase mlfA (4870 aa).

Residues 106–497 (ERRAANRPHS…CGRADTQVKL (392 aa)) form an adenylation 1 region. Residues 635 to 711 (LGLSQLEQEI…EASSLAEVQE (77 aa)) enclose the Carrier 1 domain. Residue Ser672 is modified to O-(pantetheine 4'-phosphoryl)serine. The interval 749-1133 (EDVFPCTTMQ…ALNTLTLLQA (385 aa)) is condensation 1. Residues 1161–1550 (DRWVTRQPES…GRKDTQVKLR (390 aa)) form an adenylation 2 region. Residues 1688–1765 (TASSKLELTL…QLAAILGEAT (78 aa)) enclose the Carrier 2 domain. At Ser1725 the chain carries O-(pantetheine 4'-phosphoryl)serine. Disordered stretches follow at residues 1764 to 1794 (ATGQPESSASSTTEEGFTFSTPDDSSTNDGV) and 1829 to 1859 (GSSSCKTPSVSSSSSSSSSRKKKSAKVVSPV). 2 stretches are compositionally biased toward low complexity: residues 1769-1792 (ESSASSTTEEGFTFSTPDDSSTND) and 1830-1846 (SSSCKTPSVSSSSSSSS). Positions 1898 to 2313 (EDIYPATALQ…GVSYRDKQTL (416 aa)) are condensation 2. An adenylation 3 region spans residues 2336-2728 (VRTPHAPAVF…IGRRDGQLKL (393 aa)). The Carrier 3 domain maps to 2864–2940 (RPATAQEREM…QLMRHLSANG (77 aa)). Ser2901 is subject to O-(pantetheine 4'-phosphoryl)serine. 2 condensation regions span residues 2957 to 3422 (WVPL…TYDQ) and 3443 to 3862 (DIYP…EQLV). Residues 3887–4277 (HSSREAACAW…VGRKDNQIKF (391 aa)) are adenylation 4. One can recognise a Carrier 4 domain in the interval 4411-4487 (MPFTAAECKM…DLAYRTANLV (77 aa)). An O-(pantetheine 4'-phosphoryl)serine modification is found at Ser4448. The tract at residues 4524–4837 (EVLPTTSFQR…LQTIVQHQNN (314 aa)) is condensation 5.

Belongs to the NRP synthetase family.

Its pathway is secondary metabolite biosynthesis. In terms of biological role, nonribosomal peptide synthetase; part of the gene cluster that mediates the biosynthesis of malformins, cyclic pentapeptides with a disulfide bond between 2 consecutive cysteins, that show potential anti-tumor as well as antimalarial and antitrypanosomal properties. The nonribosomal peptide synthetase mlfA is responsible of the formation of the cyclic pentapeptide. The malformin biosynthesis clusters in malformin-producing fungi also contain enzymes involved in the formation of the disulfide bond between the two consecutive cysteins within malformins, in addition to additional tailoring enzymes such as methyltransferases or oxidoreductases. They are also composed of up to 4 major facilitator superfamily transporters, and transcription factors probably involved in the regulation of the expression of those clusters. The chain is Malformin synthetase mlfA from Aspergillus niger (strain ATCC 1015 / CBS 113.46 / FGSC A1144 / LSHB Ac4 / NCTC 3858a / NRRL 328 / USDA 3528.7).